A 309-amino-acid polypeptide reads, in one-letter code: Ribonuclease Z (309 aa).

His61, His63, Asp65, His66, His144, Asp212, and His271 together coordinate Zn(2+). Asp65 functions as the Proton acceptor in the catalytic mechanism.

This sequence belongs to the RNase Z family. As to quaternary structure, homodimer. Zn(2+) is required as a cofactor.

It catalyses the reaction Endonucleolytic cleavage of RNA, removing extra 3' nucleotides from tRNA precursor, generating 3' termini of tRNAs. A 3'-hydroxy group is left at the tRNA terminus and a 5'-phosphoryl group is left at the trailer molecule.. Zinc phosphodiesterase, which displays some tRNA 3'-processing endonuclease activity. Probably involved in tRNA maturation, by removing a 3'-trailer from precursor tRNA. The polypeptide is Ribonuclease Z (Clostridium acetobutylicum (strain ATCC 824 / DSM 792 / JCM 1419 / IAM 19013 / LMG 5710 / NBRC 13948 / NRRL B-527 / VKM B-1787 / 2291 / W)).